The chain runs to 513 residues: Noroxomaritidine synthase 1 (513 aa).

The chain crosses the membrane as a helical span at residues Ile18–Ala34. Cys458 lines the heme pocket.

It belongs to the cytochrome P450 family. The cofactor is heme. In terms of tissue distribution, mostly expressed in stems, and, to a lower extent, in bulbs, roots, leaves and flowers.

Its subcellular location is the membrane. It carries out the reaction 4'-O-methylnorbelladine + reduced [NADPH--hemoprotein reductase] + O2 = (10bR,4aS)-noroxomaritidine + oxidized [NADPH--hemoprotein reductase] + 2 H2O + H(+). The catalysed reaction is 4'-O-methylnorbelladine + reduced [NADPH--hemoprotein reductase] + O2 = (10bS,4aR)-noroxomaritidine + oxidized [NADPH--hemoprotein reductase] + 2 H2O + H(+). The protein operates within alkaloid biosynthesis. Functionally, cytochrome P450 that catalyzes an intramolecular para-para' C-C phenol coupling of 4'-O-methylnorbelladine in alkaloids biosynthesis, including haemanthamine- and crinamine-type alkaloids, promising anticancer agents. Catalyzes the formation of (10bR,4aS)-noroxomaritidine and (10bS,4aR)-noroxomaritidine from 4'-O-methylnorbelladine. The sequence is that of Noroxomaritidine synthase 1 from Narcissus pseudonarcissus (Daffodil).